The sequence spans 369 residues: MSHPSSIVRRVSKQIMVGNVPVGGNAPITVQSMTNTLTTDVAATVAQIKRLEAVGADMVRVSVPTMNAAEAFREIKALSNIPLIADIHFDYRIALKVAEYGVDCLRINPGNIGNERRIRSVVDCARDHNIPIRIGVNGGSLEADIQAKYGEPTAQALVDSALRHVDILDRLNFDQFKVSVKASDAQLAVESYQLLAKQINQPLHLGITEAGGLRSGSVKSAVGLGMLLSQGIGDTLRVSLAADPVEEIKVGFDILKSLRIRSRGINFIACPTCSRQEFDVIATVNALEERLEDITMPMDVSIIGCVVNGPGEALMSDLGITGGSNKSGFYEDGVRQRDRFDNNNVIDQLEAKIRARVSRTDQSNIILKV.

[4Fe-4S] cluster contacts are provided by Cys270, Cys273, Cys305, and Glu312.

It belongs to the IspG family. The cofactor is [4Fe-4S] cluster.

The enzyme catalyses (2E)-4-hydroxy-3-methylbut-2-enyl diphosphate + oxidized [flavodoxin] + H2O + 2 H(+) = 2-C-methyl-D-erythritol 2,4-cyclic diphosphate + reduced [flavodoxin]. The protein operates within isoprenoid biosynthesis; isopentenyl diphosphate biosynthesis via DXP pathway; isopentenyl diphosphate from 1-deoxy-D-xylulose 5-phosphate: step 5/6. Converts 2C-methyl-D-erythritol 2,4-cyclodiphosphate (ME-2,4cPP) into 1-hydroxy-2-methyl-2-(E)-butenyl 4-diphosphate. The sequence is that of 4-hydroxy-3-methylbut-2-en-1-yl diphosphate synthase (flavodoxin) from Psychromonas ingrahamii (strain DSM 17664 / CCUG 51855 / 37).